A 239-amino-acid chain; its full sequence is Ribosomal RNA small subunit methyltransferase G (239 aa).

S-adenosyl-L-methionine-binding positions include G78, F83, 129-130, and R148; that span reads AE.

The protein belongs to the methyltransferase superfamily. RNA methyltransferase RsmG family.

The protein localises to the cytoplasm. Its function is as follows. Specifically methylates the N7 position of a guanine in 16S rRNA. This chain is Ribosomal RNA small subunit methyltransferase G, found in Desulfitobacterium hafniense (strain Y51).